A 387-amino-acid chain; its full sequence is 3-ketoacyl-CoA thiolase (387 aa).

The Acyl-thioester intermediate role is filled by Cys-91. Catalysis depends on proton acceptor residues His-343 and Cys-373.

The protein belongs to the thiolase-like superfamily. Thiolase family. As to quaternary structure, heterotetramer of two alpha chains (FadB) and two beta chains (FadA).

The protein localises to the cytoplasm. It catalyses the reaction an acyl-CoA + acetyl-CoA = a 3-oxoacyl-CoA + CoA. The protein operates within lipid metabolism; fatty acid beta-oxidation. Catalyzes the final step of fatty acid oxidation in which acetyl-CoA is released and the CoA ester of a fatty acid two carbons shorter is formed. The protein is 3-ketoacyl-CoA thiolase of Shigella sonnei (strain Ss046).